Reading from the N-terminus, the 375-residue chain is Thiamine-phosphate synthase (375 aa).

The segment at 1 to 127 is unknown; that stretch reads MTNAESRTVL…AACIESIRYQ (127 aa). The interval 128 to 375 is thiamine-phosphate synthase; that stretch reads CYATFRELEL…SSDVCPLPND (248 aa). 4-amino-2-methyl-5-(diphosphooxymethyl)pyrimidine is bound by residues 183–185 and Asn-215; that span reads QLR. 2 residues coordinate Mg(2+): Asp-216 and Glu-235. Ser-254 and Lys-283 together coordinate 4-amino-2-methyl-5-(diphosphooxymethyl)pyrimidine. Gly-315 contributes to the 2-[(2R,5Z)-2-carboxy-4-methylthiazol-5(2H)-ylidene]ethyl phosphate binding site.

This sequence belongs to the thiamine-phosphate synthase family. Requires Mg(2+) as cofactor.

The catalysed reaction is 2-[(2R,5Z)-2-carboxy-4-methylthiazol-5(2H)-ylidene]ethyl phosphate + 4-amino-2-methyl-5-(diphosphooxymethyl)pyrimidine + 2 H(+) = thiamine phosphate + CO2 + diphosphate. It catalyses the reaction 2-(2-carboxy-4-methylthiazol-5-yl)ethyl phosphate + 4-amino-2-methyl-5-(diphosphooxymethyl)pyrimidine + 2 H(+) = thiamine phosphate + CO2 + diphosphate. It carries out the reaction 4-methyl-5-(2-phosphooxyethyl)-thiazole + 4-amino-2-methyl-5-(diphosphooxymethyl)pyrimidine + H(+) = thiamine phosphate + diphosphate. The protein operates within cofactor biosynthesis; thiamine diphosphate biosynthesis; thiamine phosphate from 4-amino-2-methyl-5-diphosphomethylpyrimidine and 4-methyl-5-(2-phosphoethyl)-thiazole: step 1/1. Condenses 4-methyl-5-(beta-hydroxyethyl)thiazole monophosphate (THZ-P) and 2-methyl-4-amino-5-hydroxymethyl pyrimidine pyrophosphate (HMP-PP) to form thiamine monophosphate (TMP). This chain is Thiamine-phosphate synthase (thiE), found in Rhodopirellula baltica (strain DSM 10527 / NCIMB 13988 / SH1).